The sequence spans 371 residues: Ligninase LG5 (371 aa).

The signal sequence occupies residues 1 to 21 (MAFKKLLAVLTAALSLRAAQG). A propeptide spanning residues 22-27 (AAVEKR) is cleaved from the precursor. Intrachain disulfides connect cysteine 30/cysteine 42, cysteine 41/cysteine 311, cysteine 61/cysteine 146, and cysteine 275/cysteine 344. Residue histidine 74 is the Proton acceptor of the active site. Aspartate 75, glycine 92, aspartate 94, and serine 96 together coordinate Ca(2+). A heme b-binding site is contributed by histidine 202. Ca(2+)-binding residues include serine 203, aspartate 220, threonine 222, isoleucine 225, and aspartate 227. An N-linked (GlcNAc...) asparagine glycan is attached at asparagine 283. A disordered region spans residues 349-371 (FPTLSTLPGPATSVARIPPPPGA).

This sequence belongs to the peroxidase family. Ligninase subfamily. Ca(2+) serves as cofactor. The cofactor is heme b.

It carries out the reaction 1-(3,4-dimethoxyphenyl)-2-(2-methoxyphenoxy)propane-1,3-diol + H2O2 = 3,4-dimethoxybenzaldehyde + guaiacol + glycolaldehyde + H2O. It catalyses the reaction 2 (3,4-dimethoxyphenyl)methanol + H2O2 = 2 (3,4-dimethoxyphenyl)methanol radical + 2 H2O. The protein operates within secondary metabolite metabolism; lignin degradation. Functionally, depolymerization of lignin. Catalyzes the C(alpha)-C(beta) cleavage of the propyl side chains of lignin. This chain is Ligninase LG5 (GLG5), found in Phanerodontia chrysosporium (White-rot fungus).